Consider the following 248-residue polypeptide: tRNA uridine(34) hydroxylase (248 aa).

The Rhodanese domain occupies 127–221 (RGRPLVLLDT…YFEEVGGEGY (95 aa)). Catalysis depends on C181, which acts as the Cysteine persulfide intermediate.

This sequence belongs to the TrhO family.

It catalyses the reaction uridine(34) in tRNA + AH2 + O2 = 5-hydroxyuridine(34) in tRNA + A + H2O. Its function is as follows. Catalyzes oxygen-dependent 5-hydroxyuridine (ho5U) modification at position 34 in tRNAs. This is tRNA uridine(34) hydroxylase from Xanthomonas euvesicatoria pv. vesicatoria (strain 85-10) (Xanthomonas campestris pv. vesicatoria).